We begin with the raw amino-acid sequence, 378 residues long: AT-hook motif nuclear-localized protein 5 (378 aa).

Disordered regions lie at residues Gln-30 to Arg-70, Val-88 to Gln-160, and Asn-302 to Gly-378. The span at Val-104–Lys-113 shows a compositional bias: basic residues. A Bipartite nuclear localization signal motif is present at residues Lys-105 to Lys-113. 2 consecutive DNA-binding regions (a.T hook) follow at residues Lys-105–Asp-117 and Lys-147–Lys-159. The PPC domain maps to Thr-171–Lys-314. Polar residues-rich tracts occupy residues Glu-316–Gly-327 and Ser-335–Pro-345.

As to quaternary structure, interacts with AHL29.

It is found in the nucleus. Functionally, transcription factor that specifically binds AT-rich DNA sequences related to the nuclear matrix attachment regions (MARs). The sequence is that of AT-hook motif nuclear-localized protein 5 from Arabidopsis thaliana (Mouse-ear cress).